We begin with the raw amino-acid sequence, 162 residues long: Transcription antitermination protein NusB (162 aa).

The protein belongs to the NusB family.

Functionally, involved in transcription antitermination. Required for transcription of ribosomal RNA (rRNA) genes. Binds specifically to the boxA antiterminator sequence of the ribosomal RNA (rrn) operons. This chain is Transcription antitermination protein NusB, found in Xanthomonas euvesicatoria pv. vesicatoria (strain 85-10) (Xanthomonas campestris pv. vesicatoria).